Here is a 624-residue protein sequence, read N- to C-terminus: tRNA uridine 5-carboxymethylaminomethyl modification enzyme MnmG (624 aa).

Residues 14–19 (GGGHAG), valine 126, and serine 181 contribute to the FAD site. Residue 273-287 (GPRYCPSIEDKVVRF) coordinates NAD(+). Residue glutamine 370 coordinates FAD.

This sequence belongs to the MnmG family. As to quaternary structure, homodimer. Heterotetramer of two MnmE and two MnmG subunits. It depends on FAD as a cofactor.

Its subcellular location is the cytoplasm. In terms of biological role, NAD-binding protein involved in the addition of a carboxymethylaminomethyl (cmnm) group at the wobble position (U34) of certain tRNAs, forming tRNA-cmnm(5)s(2)U34. This is tRNA uridine 5-carboxymethylaminomethyl modification enzyme MnmG from Geotalea uraniireducens (strain Rf4) (Geobacter uraniireducens).